Reading from the N-terminus, the 717-residue chain is Polyribonucleotide nucleotidyltransferase (717 aa).

2 residues coordinate Mg(2+): D486 and D492. The KH domain maps to 553-612; sequence PRMITVKINPEKIRDVIGKGGSTIQALTKETGCTIDIQEDGTITIASTSSEGMAEAKRRI. One can recognise an S1 motif domain in the interval 622-690; it reads GKIYSGTVLK…EKGRMRLSIK (69 aa). Residues 690–717 form a disordered region; the sequence is KAAKAEEGDVPATAPQAPGAGDATSQQQ.

It belongs to the polyribonucleotide nucleotidyltransferase family. Mg(2+) is required as a cofactor.

It is found in the cytoplasm. It catalyses the reaction RNA(n+1) + phosphate = RNA(n) + a ribonucleoside 5'-diphosphate. Involved in mRNA degradation. Catalyzes the phosphorolysis of single-stranded polyribonucleotides processively in the 3'- to 5'-direction. The chain is Polyribonucleotide nucleotidyltransferase from Ralstonia nicotianae (strain ATCC BAA-1114 / GMI1000) (Ralstonia solanacearum).